Consider the following 463-residue polypeptide: Cytochrome P450 4d8 (463 aa).

Heme-binding residues include Glu-267 and Cys-409.

Belongs to the cytochrome P450 family. Heme is required as a cofactor.

The protein localises to the endoplasmic reticulum membrane. Its subcellular location is the microsome membrane. May be involved in the metabolism of insect hormones and in the breakdown of synthetic insecticides. This Drosophila melanogaster (Fruit fly) protein is Cytochrome P450 4d8 (Cyp4d8).